We begin with the raw amino-acid sequence, 121 residues long: Small ribosomal subunit protein uS13 (121 aa).

The tract at residues 91-121 is disordered; that stretch reads HRRGLPVRGQKTKNNARTRKGPVKTVANKKK.

Belongs to the universal ribosomal protein uS13 family. As to quaternary structure, part of the 30S ribosomal subunit. Forms a loose heterodimer with protein S19. Forms two bridges to the 50S subunit in the 70S ribosome.

Located at the top of the head of the 30S subunit, it contacts several helices of the 16S rRNA. In the 70S ribosome it contacts the 23S rRNA (bridge B1a) and protein L5 of the 50S subunit (bridge B1b), connecting the 2 subunits; these bridges are implicated in subunit movement. Contacts the tRNAs in the A and P-sites. This is Small ribosomal subunit protein uS13 from Staphylococcus carnosus (strain TM300).